The following is a 370-amino-acid chain: MKFFCVAGLLASAAAFQAQPAAFTTYSPAVGGATSNVFSESSSPAHRNRRATIVMDGKANAIRDRITSVKNTKKITMAMKLVAAAKVRRAQDAVLATRPFSETLQSVFGGLIARMGGEALDLPLLTQREVSKVTLVVITGDRGLCGGYNSFMIKKAEARFNELKDQGVACDMVLIGKKGITYFQRRGYPIRKTFETGQNPDSKQALAISEELLNTYLSGESDAVELLYTKFISLIASSPSARTLIPFSASEITQQGDEVFQLTSSGGDFEVERTELEVAEPQDFPNDMIFEQDPIQIINSILPLYLNGQILRTLQESVASELAARMQSMQSASDNAGDLAKRLSTEYNRARQAAVTQEILEIVSGASALE.

The transit peptide at 1–55 (MKFFCVAGLLASAAAFQAQPAAFTTYSPAVGGATSNVFSESSSPAHRNRRATIVM) directs the protein to the chloroplast. The active site involves Cys145.

Belongs to the ATPase gamma chain family. F-type ATPases have 2 components, CF(1) - the catalytic core - and CF(0) - the membrane proton channel. CF(1) has five subunits: alpha(3), beta(3), gamma(1), delta(1), epsilon(1). CF(0) has four main subunits: a, b, b' and c.

The protein resides in the plastid. The protein localises to the chloroplast thylakoid membrane. Functionally, produces ATP from ADP in the presence of a proton gradient across the membrane. The gamma chain is believed to be important in regulating ATPase activity and the flow of protons through the CF(0) complex. This is ATP synthase gamma chain, chloroplastic (ATPC) from Trieres chinensis (Marine centric diatom).